The sequence spans 144 residues: Transcriptional regulator SlyA (144 aa).

One can recognise an HTH marR-type domain in the interval 2 to 135 (ESPLGSDLAR…LIKLVAKLEH (134 aa)). A DNA-binding region (H-T-H motif) is located at residues 49–72 (QIQLAKAIGIEQPSLVRTLDQLED).

Belongs to the SlyA family. Homodimer.

Its function is as follows. Transcription regulator that can specifically activate or repress expression of target genes. Required to activate expression of virulent genes. The sequence is that of Transcriptional regulator SlyA from Salmonella choleraesuis (strain SC-B67).